Here is a 992-residue protein sequence, read N- to C-terminus: MESLIQHILSATSSLSMPSVDSDKLQLLLTRFPQATLSWLSGIDGLSVHQFKVVATHVIKESYSHLSPSVAVLLAKPSDYYKLVVHGLTQKQWNEFDDKVTDAPRTAISWLYNQILVVGQPWMKSLNEGLKEYLPGWLHTCLRMLANLWFGAERVLHGISHAVSDITTYQPWMSCRRCVAHSPKESLLGEATTTSNPRESSWFSWLLCGGVVAATVYGFYKWVTITETIDRQDLAKQRPTHMQKCYEEVKARLEEESKGFIHDRMEDELTKIVLEPAEIDNDGKVLKSEVAQYLVKNHGRFVRSLVTMAKNEFAGVPKPTEANQLAVWRYLYRVCDKKGVNPSDTQKSISAALPFVFLPSAYDQDQAITMNCDDTKKVLERYADTFRHTTPLQKLVTNPLVGANWTAWARSIFISDPETGLRFAKXGCIEKWQGVQCKRTRVRHPRLRCHFKDRDPKVRSIYRIAGLGDQYEFGLHNNSAANLERGLAERVYMVKNYKTDFVASLDPAFCPAPEPVRGIFKRLDKYKKEIVRRVGRKSPITDEMFLSYYDGPQLTTYSKAVISLSERPVAVQDSYLKTFIKAEKLNLTLKTDPCPRVIQPRHPRYNVELGKYLKHIEHPIYKAIDRIWGGKTIFKGMNVEAMGAEIHKKMCKYSNPCAIGFDASRFDQHVSVEALRFEHSIYKSIHGYPELLSLLLKWQIHNQGTAHTNDGFFKYLVDGKRMSGDMNTSLGNCILASLIVKDLVDSLGVDAQLVNNGDDNVLICSVDDEEVVVKALYDHWMKYGFEVVAEQPVYITEQIEFCQMKPVFDGTQYVLVRNPTVTMSKDACSITPFYTANSARKWCRAVGEAGLSLTGGMPIKQAYYQCMIRNGINKGNIHKSKEFRYGLSYVLHHGKSDRKARPISAATRYSFYLAFGYTPDEQTALEGYYDSLELEWTESRLGIPARTPECLLLRLLPKIPLQPKSPTKPVQRTASKPDLPDSQWQQALAAPL.

Residues 656–772 (PCAIGFDASR…ICSVDDEEVV (117 aa)) form the RdRp catalytic domain. The interval 963 to 992 (PKSPTKPVQRTASKPDLPDSQWQQALAAPL) is disordered. Over residues 964 to 974 (KSPTKPVQRTA) the composition is skewed to polar residues.

The protein belongs to the tombusviridae RNA polymerase family.

It localises to the host membrane. The catalysed reaction is RNA(n) + a ribonucleoside 5'-triphosphate = RNA(n+1) + diphosphate. In terms of biological role, RNA-dependent RNA polymerase that plays an essential role in the virus replication. This Muhlenbergia (Blackwell switchgrass) protein is RNA-directed RNA polymerase.